Consider the following 338-residue polypeptide: Fructose-1,6-bisphosphatase class 1 (338 aa).

Mg(2+)-binding residues include Glu-92, Asp-114, Leu-116, and Asp-117. Residues 117–120 (DGSS), Asn-210, Tyr-243, and Lys-276 contribute to the substrate site. Glu-282 contributes to the Mg(2+) binding site.

This sequence belongs to the FBPase class 1 family. In terms of assembly, homotetramer. Mg(2+) serves as cofactor.

Its subcellular location is the cytoplasm. The catalysed reaction is beta-D-fructose 1,6-bisphosphate + H2O = beta-D-fructose 6-phosphate + phosphate. It participates in carbohydrate biosynthesis; gluconeogenesis. The chain is Fructose-1,6-bisphosphatase class 1 from Maridesulfovibrio salexigens (strain ATCC 14822 / DSM 2638 / NCIMB 8403 / VKM B-1763) (Desulfovibrio salexigens).